A 389-amino-acid polypeptide reads, in one-letter code: Acetyl-CoA decarbonylase/synthase complex subunit delta (389 aa).

The protein belongs to the CdhD family. As to quaternary structure, heterodimer of delta and gamma chains. The ACDS complex is made up of alpha, epsilon, beta, gamma and delta chains with a probable stoichiometry of (alpha(2)epsilon(2))(4)-beta(8)-(gamma(1)delta(1))(8).

Its function is as follows. Part of a complex that catalyzes the reversible cleavage of acetyl-CoA, allowing autotrophic growth from CO(2). Probably maintains the overall quaternary structure of the ACDS complex. The protein is Acetyl-CoA decarbonylase/synthase complex subunit delta of Methanothermobacter thermautotrophicus (strain ATCC 29096 / DSM 1053 / JCM 10044 / NBRC 100330 / Delta H) (Methanobacterium thermoautotrophicum).